Consider the following 443-residue polypeptide: 3-phosphoshikimate 1-carboxyvinyltransferase (443 aa).

3-phosphoshikimate contacts are provided by K25, S26, and R30. K25 is a binding site for phosphoenolpyruvate. The phosphoenolpyruvate site is built by G117 and R145. The 3-phosphoshikimate site is built by S188, S189, Q190, S217, E331, and H358. Q190 contacts phosphoenolpyruvate. E331 acts as the Proton acceptor in catalysis. Residues R362, R404, and K428 each coordinate phosphoenolpyruvate.

This sequence belongs to the EPSP synthase family. As to quaternary structure, monomer.

The protein localises to the cytoplasm. It carries out the reaction 3-phosphoshikimate + phosphoenolpyruvate = 5-O-(1-carboxyvinyl)-3-phosphoshikimate + phosphate. It participates in metabolic intermediate biosynthesis; chorismate biosynthesis; chorismate from D-erythrose 4-phosphate and phosphoenolpyruvate: step 6/7. In terms of biological role, catalyzes the transfer of the enolpyruvyl moiety of phosphoenolpyruvate (PEP) to the 5-hydroxyl of shikimate-3-phosphate (S3P) to produce enolpyruvyl shikimate-3-phosphate and inorganic phosphate. This Tropheryma whipplei (strain TW08/27) (Whipple's bacillus) protein is 3-phosphoshikimate 1-carboxyvinyltransferase.